The sequence spans 937 residues: Protocadherin alpha-7 (937 aa).

Positions 1–29 are cleaved as a signal peptide; sequence MVCPNGYDPGGRHLLLFIIILAAWEAGRG. Cadherin domains follow at residues 30–133, 134–242, 243–350, 351–455, 456–565, and 581–678; these read QLHY…PPVF, PATQ…APVF, DRTL…APQL, TLTS…APAF, AQPE…APAL, and VPRS…APKA. At 30-697 the chain is on the extracellular side; sequence QLHYSVPEEA…GPETELVDVN (668 aa). A disulfide bridge links Cys96 with Cys102. N-linked (GlcNAc...) asparagine glycans are attached at residues Asn254 and Asn265. A glycan (N-linked (GlcNAc...) asparagine) is linked at Asn548. A helical membrane pass occupies residues 698–718; the sequence is VYLIIAICAVSSLLVLTLLLY. Residues 719–937 lie on the Cytoplasmic side of the membrane; sequence TALRCSAPSS…GNSTTDNSDQ (219 aa). Disordered regions lie at residues 756–795 and 817–843; these read QRVCSGEGPPKTDLMAFSPSLPQGPSSTDNPRQPNPDWRY and AGPGGPDQQWPTVSSATPEPEAGEVSP. PXXP repeat units follow at residues 774-777, 786-789, 819-822, 860-863, and 878-881; these read PSLP, PRQP, PGGP, PGNP, and PGSP. The segment at 774-881 is 5 X 4 AA repeats of P-X-X-P; sequence PSLPQGPSST…PDKFIIPGSP (108 aa). Residues 775 to 787 show a composition bias toward polar residues; that stretch reads SLPQGPSSTDNPR. A disordered region spans residues 888–937; it reads QEPANSQIDKSDFITFGKKEETKKKKKKKKGNKTQEKKEKGNSTTDNSDQ. Residues 896-910 are compositionally biased toward basic and acidic residues; that stretch reads DKSDFITFGKKEETK.

In terms of assembly, forms homodimers in trans (molecules expressed by two different cells). Forms promiscuous heterodimers in cis (at the plasma membrane of the same cell) with other protocadherins.

The protein resides in the cell membrane. Functionally, calcium-dependent cell-adhesion protein involved in cells self-recognition and non-self discrimination. Thereby, it is involved in the establishment and maintenance of specific neuronal connections in the brain. The chain is Protocadherin alpha-7 from Pan troglodytes (Chimpanzee).